The primary structure comprises 29 residues: Varv peptide D (29 aa).

A cross-link (cyclopeptide (Gly-Asn)) is located at residues 1–29 (GLPICGETCVGGSCNTPGCSCSWPVCTRN). Cystine bridges form between Cys5-Cys19, Cys9-Cys21, and Cys14-Cys26.

Post-translationally, this is a cyclic peptide.

Probably participates in a plant defense mechanism. This is Varv peptide D from Viola arvensis (European field pansy).